The sequence spans 399 residues: Putative glutamate--cysteine ligase 2 (399 aa).

Positions 377-399 (PAVGSSHGRTDPSRNGGPSHAGA) are disordered.

Belongs to the glutamate--cysteine ligase type 2 family. YbdK subfamily.

The catalysed reaction is L-cysteine + L-glutamate + ATP = gamma-L-glutamyl-L-cysteine + ADP + phosphate + H(+). Its function is as follows. ATP-dependent carboxylate-amine ligase which exhibits weak glutamate--cysteine ligase activity. The protein is Putative glutamate--cysteine ligase 2 of Thermobifida fusca (strain YX).